Here is a 1233-residue protein sequence, read N- to C-terminus: Integrator complex subunit 4 homolog (1233 aa).

2 HEAT repeats span residues S236–K273 and S275–S310. The segment at R426–P473 is disordered. Over residues Q428–Q462 the composition is skewed to low complexity. HEAT repeat units follow at residues I487–E524, F525–I561, and E563–S597. A compositionally biased stretch (low complexity) spans N767–N792. Disordered stretches follow at residues N767–D796 and D993–T1057. Acidic residues predominate over residues E1000 to N1013. The segment covering E1014–N1030 has biased composition (basic and acidic residues). Positions K1046–T1057 are enriched in low complexity.

Belongs to the Integrator subunit 4 family. In terms of assembly, component of the Integrator complex. The core complex associates with protein phosphatase 2A subunits, to form the Integrator-PP2A (INTAC) complex.

Its subcellular location is the nucleus. It is found in the cytoplasm. Functionally, component of the integrator complex, a multiprotein complex that terminates RNA polymerase II (Pol II) transcription in the promoter-proximal region of genes. The integrator complex provides a quality checkpoint during transcription elongation by driving premature transcription termination of transcripts that are unfavorably configured for transcriptional elongation: the complex terminates transcription by (1) catalyzing dephosphorylation of the C-terminal domain (CTD) of Pol II subunit polr2a, (2) degrading the exiting nascent RNA transcript via endonuclease activity and (3) promoting the release of Pol II from bound DNA. The integrator complex is also involved in terminating the synthesis of non-coding Pol II transcripts, such as enhancer RNAs (eRNAs), small nuclear RNAs (snRNAs), telomerase RNAs and long non-coding RNAs (lncRNAs). The polypeptide is Integrator complex subunit 4 homolog (ints4) (Dictyostelium discoideum (Social amoeba)).